The sequence spans 302 residues: 4-hydroxy-tetrahydrodipicolinate synthase (302 aa).

Thr55 is a binding site for pyruvate. The Proton donor/acceptor role is filled by Tyr144. The Schiff-base intermediate with substrate role is filled by Lys172. Val214 lines the pyruvate pocket.

It belongs to the DapA family. Homotetramer; dimer of dimers.

It localises to the cytoplasm. It carries out the reaction L-aspartate 4-semialdehyde + pyruvate = (2S,4S)-4-hydroxy-2,3,4,5-tetrahydrodipicolinate + H2O + H(+). The protein operates within amino-acid biosynthesis; L-lysine biosynthesis via DAP pathway; (S)-tetrahydrodipicolinate from L-aspartate: step 3/4. Functionally, catalyzes the condensation of (S)-aspartate-beta-semialdehyde [(S)-ASA] and pyruvate to 4-hydroxy-tetrahydrodipicolinate (HTPA). The polypeptide is 4-hydroxy-tetrahydrodipicolinate synthase (Synechococcus sp. (strain CC9311)).